A 221-amino-acid chain; its full sequence is Lipoprotein-releasing system ATP-binding protein LolD (221 aa).

One can recognise an ABC transporter domain in the interval 6–220 (LILKKISKHY…YNLKNGLLNI (215 aa)). 42–49 (GSSGSGKS) contributes to the ATP binding site.

The protein belongs to the ABC transporter superfamily. Lipoprotein translocase (TC 3.A.1.125) family. As to quaternary structure, the complex is composed of two ATP-binding proteins (LolD) and two transmembrane proteins (LolC and LolE).

The protein localises to the cell inner membrane. Part of the ABC transporter complex LolCDE involved in the translocation of mature outer membrane-directed lipoproteins, from the inner membrane to the periplasmic chaperone, LolA. Responsible for the formation of the LolA-lipoprotein complex in an ATP-dependent manner. The protein is Lipoprotein-releasing system ATP-binding protein LolD of Rickettsia typhi (strain ATCC VR-144 / Wilmington).